The primary structure comprises 416 residues: Doublesex- and mab-3-related transcription factor A2 (416 aa).

A DNA-binding region (DM) is located at residues 25–72 (CARCRNHGVVSALKGHKRYCRWKDCMCAKCTLIAERQRVMAAQVALRR). Positions 131-154 (FSKGQLSGPTTPQQAAGKSASAES) are enriched in polar residues. The segment at 131–226 (FSKGQLSGPT…PSPSSAASRH (96 aa)) is disordered. Positions 197-207 (GSVSSIGSDSG) are enriched in low complexity. One can recognise a DMA domain in the interval 227 to 262 (MNAIDILTRVFPSHKRSILELVLQGCGKDVVQAIEQ).

The protein belongs to the DMRT family.

Its subcellular location is the nucleus. May be involved in sexual development. In Takifugu rubripes (Japanese pufferfish), this protein is Doublesex- and mab-3-related transcription factor A2 (dmrta2).